The primary structure comprises 171 residues: Endoribonuclease YbeY (171 aa).

Positions 126, 130, and 136 each coordinate Zn(2+).

Belongs to the endoribonuclease YbeY family. Zn(2+) is required as a cofactor.

The protein resides in the cytoplasm. Single strand-specific metallo-endoribonuclease involved in late-stage 70S ribosome quality control and in maturation of the 3' terminus of the 16S rRNA. The polypeptide is Endoribonuclease YbeY (Rhizobium leguminosarum bv. trifolii (strain WSM2304)).